The following is a 514-amino-acid chain: Bifunctional purine biosynthesis protein PurH (514 aa).

In terms of domain architecture, MGS-like spans 1–143 (MTRRALISVS…KNHAGVLVLV (143 aa)).

This sequence belongs to the PurH family.

It carries out the reaction (6R)-10-formyltetrahydrofolate + 5-amino-1-(5-phospho-beta-D-ribosyl)imidazole-4-carboxamide = 5-formamido-1-(5-phospho-D-ribosyl)imidazole-4-carboxamide + (6S)-5,6,7,8-tetrahydrofolate. The catalysed reaction is IMP + H2O = 5-formamido-1-(5-phospho-D-ribosyl)imidazole-4-carboxamide. It participates in purine metabolism; IMP biosynthesis via de novo pathway; 5-formamido-1-(5-phospho-D-ribosyl)imidazole-4-carboxamide from 5-amino-1-(5-phospho-D-ribosyl)imidazole-4-carboxamide (10-formyl THF route): step 1/1. It functions in the pathway purine metabolism; IMP biosynthesis via de novo pathway; IMP from 5-formamido-1-(5-phospho-D-ribosyl)imidazole-4-carboxamide: step 1/1. In Deinococcus geothermalis (strain DSM 11300 / CIP 105573 / AG-3a), this protein is Bifunctional purine biosynthesis protein PurH.